The sequence spans 448 residues: DNA repair protein RadA (448 aa).

The segment at 10–27 adopts a C4-type zinc-finger fold; the sequence is CQHCGFTSPKWLGKCVQC. 96–103 is an ATP binding site; sequence GSPGVGKS. The RadA KNRFG motif signature appears at 253–257; the sequence is KNRFG. Residues 351-448 form a lon-protease-like region; it reads DVFINVSGGI…NAVGKIVEWM (98 aa).

It belongs to the RecA family. RadA subfamily.

Its function is as follows. DNA-dependent ATPase involved in processing of recombination intermediates, plays a role in repairing DNA breaks. Stimulates the branch migration of RecA-mediated strand transfer reactions, allowing the 3' invading strand to extend heteroduplex DNA faster. Binds ssDNA in the presence of ADP but not other nucleotides, has ATPase activity that is stimulated by ssDNA and various branched DNA structures, but inhibited by SSB. Does not have RecA's homology-searching function. This is DNA repair protein RadA from Helicobacter pylori (strain ATCC 700392 / 26695) (Campylobacter pylori).